The following is a 249-amino-acid chain: Triosephosphate isomerase (249 aa).

Position 9-11 (9-11 (NWK)) interacts with substrate. The Electrophile role is filled by histidine 95. The active-site Proton acceptor is the glutamate 166. Substrate-binding positions include glycine 172, serine 211, and 232 to 233 (GG).

The protein belongs to the triosephosphate isomerase family. In terms of assembly, homodimer.

The protein localises to the cytoplasm. It carries out the reaction D-glyceraldehyde 3-phosphate = dihydroxyacetone phosphate. It functions in the pathway carbohydrate biosynthesis; gluconeogenesis. Its pathway is carbohydrate degradation; glycolysis; D-glyceraldehyde 3-phosphate from glycerone phosphate: step 1/1. Functionally, involved in the gluconeogenesis. Catalyzes stereospecifically the conversion of dihydroxyacetone phosphate (DHAP) to D-glyceraldehyde-3-phosphate (G3P). This Legionella pneumophila (strain Lens) protein is Triosephosphate isomerase.